A 491-amino-acid chain; its full sequence is Maintenance of mitochondrial morphology protein 1 (491 aa).

The Lumenal segment spans residues 1 to 22; that stretch reads MTFQQNEPSAVPAQSSLSFTQG. Residues 23 to 43 traverse the membrane as a helical segment; the sequence is FLLGQLSVVLLIGAFIKFFIF. Topologically, residues 44–491 are cytoplasmic; sequence GEAPPPPSRG…GTLPGGAAAN (448 aa). Disordered stretches follow at residues 50 to 95, 275 to 325, and 392 to 491; these read PSRG…PVPS, PPLH…SPKS, and RTGV…AAAN. Over residues 54 to 64 the composition is skewed to basic residues; the sequence is LSHRASTHRRS. Composition is skewed to polar residues over residues 65 to 78 and 85 to 95; these read NSIY…GTSR and STSNVLRPVPS. The region spanning 131–384 is the SMP-LTD domain; it reads QPESLDWFNV…EPRVQVVGLP (254 aa). Positions 275–287 are enriched in pro residues; the sequence is PPLHTPSPSPSPP. Polar residues-rich tracts occupy residues 300-315 and 403-412; these read TNGS…NAQE and TGSNAASRSA. Positions 422–434 are enriched in basic and acidic residues; the sequence is RADDIGREPDGLR.

The protein belongs to the MMM1 family. In terms of assembly, homodimer. Component of the ER-mitochondria encounter structure (ERMES) or MDM complex, composed of mmm1, mdm10, mdm12 and mdm34. A mmm1 homodimer associates with one molecule of mdm12 on each side in a pairwise head-to-tail manner, and the SMP-LTD domains of mmm1 and mdm12 generate a continuous hydrophobic tunnel for phospholipid trafficking.

It is found in the endoplasmic reticulum membrane. Component of the ERMES/MDM complex, which serves as a molecular tether to connect the endoplasmic reticulum (ER) and mitochondria. Components of this complex are involved in the control of mitochondrial shape and protein biogenesis, and function in nonvesicular lipid trafficking between the ER and mitochondria. The mdm12-mmm1 subcomplex functions in the major beta-barrel assembly pathway that is responsible for biogenesis of all outer membrane beta-barrel proteins, and acts in a late step after the SAM complex. The mdm10-mdm12-mmm1 subcomplex further acts in the TOM40-specific pathway after the action of the mdm12-mmm1 complex. Essential for establishing and maintaining the structure of mitochondria and maintenance of mtDNA nucleoids. The sequence is that of Maintenance of mitochondrial morphology protein 1 from Aspergillus flavus (strain ATCC 200026 / FGSC A1120 / IAM 13836 / NRRL 3357 / JCM 12722 / SRRC 167).